Reading from the N-terminus, the 411-residue chain is Arginine deiminase (411 aa).

The active-site Amidino-cysteine intermediate is the C401.

Belongs to the arginine deiminase family.

The protein resides in the cytoplasm. The catalysed reaction is L-arginine + H2O = L-citrulline + NH4(+). Its pathway is amino-acid degradation; L-arginine degradation via ADI pathway; carbamoyl phosphate from L-arginine: step 1/2. The chain is Arginine deiminase from Staphylococcus aureus (strain MRSA252).